The following is a 470-amino-acid chain: Nuclear receptor subfamily 0 group B member 1 (470 aa).

A run of 3 repeats spans residues 1-67 (MAGE…YRCC), 68-133 (FCGK…YRCC), and 134-200 (FCGE…YRCC). The segment at 1-253 (MAGENHQWQG…RPVALKNPQV (253 aa)) is 4 X 67 AA tandem repeats. 3 short sequence motifs (LXXLL motif) span residues 13–17 (LYNML), 80–84 (LYSML), and 146–150 (LYSLL). The stretch at 201-253 (FCGEDHPQQGSTLYCMPTSTNQAQAAPEERPRAPWWDTSSGALRPVALKNPQV) is one 4; truncated repeat. Residues 205–469 (DHPQQGSTLY…DMMLEMLCTK (265 aa)) form the NR LBD domain. The short motif at 461-466 (MMLEML) is the AF-2 motif element.

This sequence belongs to the nuclear hormone receptor family. NR0 subfamily. As to quaternary structure, homodimer. Interacts with NR5A1, NR5A2, NR0B2 and with COPS2. Interacts with ESRRB; represses ESRRB activity at the GATA6 promoter.

The protein localises to the nucleus. Its subcellular location is the cytoplasm. Nuclear receptor that lacks a DNA-binding domain and acts as a corepressor that inhibits the transcriptional activity of other nuclear receptors through heterodimeric interactions. Component of a cascade required for the development of the hypothalamic-pituitary-adrenal-gonadal axis. May also have a role in the development of the embryo and in the maintenance of embryonic stem cell pluripotency. The polypeptide is Nuclear receptor subfamily 0 group B member 1 (NR0B1) (Macaca mulatta (Rhesus macaque)).